The following is a 250-amino-acid chain: 3-deoxy-manno-octulosonate cytidylyltransferase (250 aa).

This sequence belongs to the KdsB family.

It is found in the cytoplasm. The enzyme catalyses 3-deoxy-alpha-D-manno-oct-2-ulosonate + CTP = CMP-3-deoxy-beta-D-manno-octulosonate + diphosphate. Its pathway is nucleotide-sugar biosynthesis; CMP-3-deoxy-D-manno-octulosonate biosynthesis; CMP-3-deoxy-D-manno-octulosonate from 3-deoxy-D-manno-octulosonate and CTP: step 1/1. The protein operates within bacterial outer membrane biogenesis; lipopolysaccharide biosynthesis. In terms of biological role, activates KDO (a required 8-carbon sugar) for incorporation into bacterial lipopolysaccharide in Gram-negative bacteria. The sequence is that of 3-deoxy-manno-octulosonate cytidylyltransferase from Geobacter sulfurreducens (strain ATCC 51573 / DSM 12127 / PCA).